Reading from the N-terminus, the 270-residue chain is Orotidine 5'-phosphate decarboxylase (270 aa).

Catalysis depends on Lys-89, which acts as the Proton donor.

Belongs to the OMP decarboxylase family. Type 2 subfamily.

The enzyme catalyses orotidine 5'-phosphate + H(+) = UMP + CO2. It participates in pyrimidine metabolism; UMP biosynthesis via de novo pathway; UMP from orotate: step 2/2. The protein is Orotidine 5'-phosphate decarboxylase of Dehalococcoides mccartyi (strain ATCC BAA-2100 / JCM 16839 / KCTC 5957 / BAV1).